Reading from the N-terminus, the 217-residue chain is Spore coat protein F-like protein YhcQ (217 aa).

Over residues 1–11 the composition is skewed to low complexity; that stretch reads MDQFNQQQQSQ. The segment at 1 to 28 is disordered; sequence MDQFNQQQQSQMNKGIPGKPHKNHGGHE.

Belongs to the CotF family.

The protein localises to the spore coat. The sequence is that of Spore coat protein F-like protein YhcQ (yhcQ) from Bacillus subtilis (strain 168).